Reading from the N-terminus, the 261-residue chain is uncharacterized protein (261 aa).

Transmembrane regions (helical) follow at residues 38–58, 134–154, 163–183, 195–215, and 219–239; these read FIYL…ITLL, YTLM…LALI, ILIN…TYVL, YMGL…LFFL, and HKSV…CLKV.

It is found in the membrane. This is an uncharacterized protein from Dictyostelium discoideum (Social amoeba).